Here is a 536-residue protein sequence, read N- to C-terminus: MAKDPGRVLIFDTTLRDGEQSPGASLNLEEKLAIAQQLARLGVDIIEAGFPYASQGDFKAVQRIADQVGGEEGPIICGLARASKADIKACAEAIAPAPRKRIHTFIATSDIHLKHKLRKSRADVLKIVPEMVGYARSLASDVEFSCEDAARSDPDFMYEVIESAIAAGAGTINIPDTVGYITPAEFGDLIIGINKNVSNIDESILSVHGHNDLGLAVANFLEAVKNGARQLECTINGIGERAGNAALEELVMALHVRRRYFNPFFGKDSESPTPLTAIRTEEITKTSRLVSNLTGMVVQPNKAIVGANAFAHESGIHQDGVLKNPLTYEIVDAKTVGLAENRISLGKLSGRSAVRARLEELGYDLTREDLNDAFARFKDLADRKREISDRDLEAIVSEQVMQPEARFKLHLVQVSCGTALRPTATVTIADQDGIENTAVALGTGPVDAVCKALRSLTNEKNDLIEFSVKSVTEGIDALGEVTIRLRRDGKIFSGHSADTDVVVAAAQAYINALNRLVYSLKKSSLHPQHDVVKANL.

The Pyruvate carboxyltransferase domain occupies 8-273; the sequence is VLIFDTTLRD…FFGKDSESPT (266 aa). Mn(2+)-binding residues include Asp-17, His-208, His-210, and Asn-244. The interval 408–536 is regulatory domain; the sequence is KLHLVQVSCG…PQHDVVKANL (129 aa).

The protein belongs to the alpha-IPM synthase/homocitrate synthase family. LeuA type 1 subfamily. Homodimer. It depends on Mn(2+) as a cofactor.

The protein localises to the cytoplasm. It carries out the reaction 3-methyl-2-oxobutanoate + acetyl-CoA + H2O = (2S)-2-isopropylmalate + CoA + H(+). The protein operates within amino-acid biosynthesis; L-leucine biosynthesis; L-leucine from 3-methyl-2-oxobutanoate: step 1/4. Functionally, catalyzes the condensation of the acetyl group of acetyl-CoA with 3-methyl-2-oxobutanoate (2-ketoisovalerate) to form 3-carboxy-3-hydroxy-4-methylpentanoate (2-isopropylmalate). This is 2-isopropylmalate synthase from Prochlorococcus marinus (strain SARG / CCMP1375 / SS120).